We begin with the raw amino-acid sequence, 219 residues long: Multiple organellar RNA editing factor 2, chloroplastic (219 aa).

The transit peptide at 1 to 48 directs the protein to the chloroplast; that stretch reads MALPLSGTRHLTRALLSNVTLMAPPRIPSSVHYGGSRLGCSTRFFSIR. Residues 182-219 are disordered; the sequence is VQRSPERQRRVEPQPQRAQDRPRYNDRTRYSRRRENTR. Residues 185-219 are compositionally biased toward basic and acidic residues; that stretch reads SPERQRRVEPQPQRAQDRPRYNDRTRYSRRRENTR.

The protein belongs to the MORF family. In terms of assembly, homodimer and heterodimer with MORF9. Interacts with protoporphyrinogen oxidase 1 PPOX1. Heterodimers with MORF8/RIP1 and MORF9/RIP9. Interacts with PCMP-A2/PMD1. Interacts with ORRM1. Interacts with ORRM6.

Its subcellular location is the plastid. It is found in the chloroplast. In terms of biological role, involved in plastid rRNA processing and consequently in translation and early chloroplast differentiation. Involved in organellar RNA editing. Required for the processing of multiple editing sites in plastids. This Arabidopsis thaliana (Mouse-ear cress) protein is Multiple organellar RNA editing factor 2, chloroplastic.